The sequence spans 206 residues: Small ribosomal subunit protein uS4 (206 aa).

The S4 RNA-binding domain maps to 98–155 (TRLDNVVYRLGWALSRDQARQLVSHGKIAVNGKRVNIPSYNLKPGDVVELLDKDLIPV).

Belongs to the universal ribosomal protein uS4 family. In terms of assembly, part of the 30S ribosomal subunit. Contacts protein S5. The interaction surface between S4 and S5 is involved in control of translational fidelity.

Its function is as follows. One of the primary rRNA binding proteins, it binds directly to 16S rRNA where it nucleates assembly of the body of the 30S subunit. Functionally, with S5 and S12 plays an important role in translational accuracy. This chain is Small ribosomal subunit protein uS4, found in Dictyoglomus thermophilum (strain ATCC 35947 / DSM 3960 / H-6-12).